Consider the following 1142-residue polypeptide: Fibronectin type-III domain-containing protein 3A (1142 aa).

Residues 104 to 191 (YGDVDAHSTH…KSGKGKGGTQ (88 aa)) are disordered. A compositionally biased stretch (basic and acidic residues) spans 107–145 (VDAHSTHGRSNFRDERSSKTYERLQKKLKDRQGTQKDKM). The segment covering 146-158 (SSPPSSPQKCPSP) has biased composition (low complexity). Phosphoserine is present on residues Ser147, Ser151, and Ser157. Fibronectin type-III domains lie at 212 to 313 (NIVK…TLSC), 317 to 409 (IPNP…TSGC), 413 to 506 (MPAS…TCPD), 510 to 604 (IPVK…TPAV), 608 to 701 (PCLP…TAPG), 705 to 795 (QCKP…TPPS), 805 to 894 (EISD…TKPL), 895 to 989 (PPDP…TPKS), and 990 to 1095 (VPAA…TEPP). Lys328 carries the N6-acetyllysine modification. The helical transmembrane segment at 1121–1141 (NLVLFAFFSILIAFIIQYFVI) threads the bilayer.

Belongs to the FNDC3 family.

It localises to the golgi apparatus membrane. Mediates spermatid-Sertoli adhesion during spermatogenesis. This Pongo abelii (Sumatran orangutan) protein is Fibronectin type-III domain-containing protein 3A (FNDC3A).